The chain runs to 359 residues: MSYRRELEKYRDLDEDEILGALTEEELRTLENELDELDPDNALLPAGLRQKDQTTKAPTGPFKREELLDHLEKQAKEFKDREDLVPYTGEKRGKVWVPKQKPMDPVLESVTLEPELEEALANASDAELCDIAAILGMHTLMSNQQYYQALGSSSIVNKEGLNSVIKPTQYKPVPDEEPNSTDVEETLERIKNNDPELEEVNLNNIRNIPIPTLKAYAEALKENSYVKKFSIVGTRSNDPVAFALAEMLKVNKVLKTLNVESNFISGAGILRLVEALPHNTSLVELKIDNQSQPLGNKVEMEIVNMLEKNTTLLKFGYHFTQQGPRLRASNAMMSNNDLVRKRRLADLTGPIIPKCRSGV.

The interval E36–P61 is disordered. Residues P39–H138 form a tropomyosin-binding region.

It belongs to the tropomodulin family. As to quaternary structure, binds to the N-terminus of tropomyosin and to actin. Interacts with FLII. In terms of tissue distribution, highly expressed in the erythrocyte, heart and skeletal muscle.

The protein localises to the cytoplasm. It localises to the cytoskeleton. In terms of biological role, blocks the elongation and depolymerization of the actin filaments at the pointed end. The Tmod/TM complex contributes to the formation of the short actin protofilament, which in turn defines the geometry of the membrane skeleton. The sequence is that of Tropomodulin-1 (Tmod1) from Mus musculus (Mouse).